Consider the following 218-residue polypeptide: tRNA (guanine-N(7)-)-methyltransferase (218 aa).

The interval 1–26 is disordered; the sequence is MRLKNKPWANELVEEHPESALDRPDP. The segment covering 13 to 26 has biased composition (basic and acidic residues); that stretch reads VEEHPESALDRPDP. Residues Glu45, Glu70, Asp97, and Asp119 each coordinate S-adenosyl-L-methionine. Asp119 is a catalytic residue. A substrate-binding site is contributed by Lys123. Residues 125 to 130 are interaction with RNA; that stretch reads RHEKRR. Substrate-binding positions include Asp155 and 195–198; that span reads TEYE.

Belongs to the class I-like SAM-binding methyltransferase superfamily. TrmB family.

It catalyses the reaction guanosine(46) in tRNA + S-adenosyl-L-methionine = N(7)-methylguanosine(46) in tRNA + S-adenosyl-L-homocysteine. It participates in tRNA modification; N(7)-methylguanine-tRNA biosynthesis. Catalyzes the formation of N(7)-methylguanine at position 46 (m7G46) in tRNA. The chain is tRNA (guanine-N(7)-)-methyltransferase from Lactobacillus delbrueckii subsp. bulgaricus (strain ATCC 11842 / DSM 20081 / BCRC 10696 / JCM 1002 / NBRC 13953 / NCIMB 11778 / NCTC 12712 / WDCM 00102 / Lb 14).